Here is a 223-residue protein sequence, read N- to C-terminus: Cytidylate kinase (223 aa).

A disordered region spans residues 1–23 (MSTSPLVIAIDGPSGSGKSSTSR). Residue 12 to 20 (GPSGSGKSS) coordinates ATP.

The protein belongs to the cytidylate kinase family. Type 1 subfamily.

It is found in the cytoplasm. It carries out the reaction CMP + ATP = CDP + ADP. The enzyme catalyses dCMP + ATP = dCDP + ADP. The sequence is that of Cytidylate kinase from Cutibacterium acnes (strain DSM 16379 / KPA171202) (Propionibacterium acnes).